The chain runs to 522 residues: Glucose-6-phosphate 1-dehydrogenase (522 aa).

NADP(+) is bound by residues 40 to 47 (GASGDLAK), R74, and K177. D-glucose 6-phosphate contacts are provided by residues K177, 207–211 (HYLGK), E245, and D264. The Proton acceptor role is filled by H269. R364 contacts NADP(+). D-glucose 6-phosphate contacts are provided by K367 and K372. Residues K373, R377, and R401 each contribute to the NADP(+) site. Position 403 (Q403) interacts with D-glucose 6-phosphate. NADP(+) is bound by residues 409–411 (YMK), 429–431 (DLT), R495, and W517.

The protein belongs to the glucose-6-phosphate dehydrogenase family.

The protein localises to the cytoplasm. It localises to the cytosol. The catalysed reaction is D-glucose 6-phosphate + NADP(+) = 6-phospho-D-glucono-1,5-lactone + NADPH + H(+). The protein operates within carbohydrate degradation; pentose phosphate pathway; D-ribulose 5-phosphate from D-glucose 6-phosphate (oxidative stage): step 1/3. In terms of biological role, cytosolic glucose-6-phosphate dehydrogenase that catalyzes the first and rate-limiting step of the oxidative branch within the pentose phosphate pathway/shunt, an alternative route to glycolysis for the dissimilation of carbohydrates and a major source of reducing power and metabolic intermediates for fatty acid and nucleic acid biosynthetic processes. The polypeptide is Glucose-6-phosphate 1-dehydrogenase (gspd-1) (Caenorhabditis elegans).